The following is a 126-amino-acid chain: Large ribosomal subunit protein bL12 (126 aa).

It belongs to the bacterial ribosomal protein bL12 family. In terms of assembly, homodimer. Part of the ribosomal stalk of the 50S ribosomal subunit. Forms a multimeric L10(L12)X complex, where L10 forms an elongated spine to which 2 to 4 L12 dimers bind in a sequential fashion. Binds GTP-bound translation factors.

Forms part of the ribosomal stalk which helps the ribosome interact with GTP-bound translation factors. Is thus essential for accurate translation. The chain is Large ribosomal subunit protein bL12 from Rhizobium meliloti (strain 1021) (Ensifer meliloti).